The following is a 428-amino-acid chain: D-amino acid dehydrogenase (428 aa).

3–17 serves as a coordination point for FAD; sequence VVILGSGVVGVASAY.

It belongs to the DadA oxidoreductase family. The cofactor is FAD.

It carries out the reaction a D-alpha-amino acid + A + H2O = a 2-oxocarboxylate + AH2 + NH4(+). The protein operates within amino-acid degradation; D-alanine degradation; NH(3) and pyruvate from D-alanine: step 1/1. In terms of biological role, oxidative deamination of D-amino acids. This is D-amino acid dehydrogenase from Burkholderia multivorans (strain ATCC 17616 / 249).